The sequence spans 389 residues: S-adenosylmethionine synthase (389 aa).

ATP is bound at residue H17. D19 serves as a coordination point for Mg(2+). A K(+)-binding site is contributed by E45. L-methionine contacts are provided by E58 and Q101. The flexible loop stretch occupies residues 101-111; that stretch reads QSPDISQGVTE. ATP-binding positions include 168-170, 234-235, D243, 249-250, A266, and K270; these read DSK, RF, and RK. L-methionine is bound at residue D243. Position 274 (K274) interacts with L-methionine.

The protein belongs to the AdoMet synthase family. Homotetramer; dimer of dimers. Mg(2+) is required as a cofactor. The cofactor is K(+).

Its subcellular location is the cytoplasm. The enzyme catalyses L-methionine + ATP + H2O = S-adenosyl-L-methionine + phosphate + diphosphate. Its pathway is amino-acid biosynthesis; S-adenosyl-L-methionine biosynthesis; S-adenosyl-L-methionine from L-methionine: step 1/1. Catalyzes the formation of S-adenosylmethionine (AdoMet) from methionine and ATP. The overall synthetic reaction is composed of two sequential steps, AdoMet formation and the subsequent tripolyphosphate hydrolysis which occurs prior to release of AdoMet from the enzyme. The chain is S-adenosylmethionine synthase from Geobacter sulfurreducens (strain ATCC 51573 / DSM 12127 / PCA).